We begin with the raw amino-acid sequence, 317 residues long: MMKIYLMGSDQRIVRCARVSFAKDSYVDEKRDKRLIRYLFKHRHASPFEHNIIAFEWKKEKWIELLSKLENPTVQVYYSNGFVFLNLRNAINVWELLPDAVKERIKEAFPTTYGVIQRRGEIEDEELYSLPYTKDKAYVKEKIETSSGWIGLVDKLELETDMDFYTFVVECPLFVARQWMRHRFGSYNEVSKRYVGKEFLEFYLPKYIRKQAEKNKQASVDEPISESEVFIKKIENLISKSVKLYEEIIEKGGAKELARGVLPQFMKTRFYWTVPRISLDNFITLRTHEGAQKEIREFAEAIKEMVGYRGTDKKNVI.

Residue Ser46 participates in FAD binding. Positions 55–166 are insert; the sequence is FEWKKEKWIE…ELETDMDFYT (112 aa). One can recognise a ThyX domain in the interval 100–317; the sequence is AVKERIKEAF…YRGTDKKNVI (218 aa). Residues 178–181, 189–193, and Arg259 each bind dUMP; these read QWMR and EVSKR. FAD-binding positions include 181–183 and Glu189; that span reads RHR. The short motif at 181 to 191 is the ThyX motif element; that stretch reads RHRFGSYNEVS. An FAD-binding site is contributed by Asn281. Residue Arg286 participates in dUMP binding. Residue Arg286 is the Involved in ionization of N3 of dUMP, leading to its activation of the active site.

The protein belongs to the thymidylate synthase ThyX family. Homotetramer. FAD serves as cofactor.

The enzyme catalyses dUMP + (6R)-5,10-methylene-5,6,7,8-tetrahydrofolate + NADPH + H(+) = dTMP + (6S)-5,6,7,8-tetrahydrofolate + NADP(+). It functions in the pathway pyrimidine metabolism; dTTP biosynthesis. Its function is as follows. Catalyzes the reductive methylation of 2'-deoxyuridine-5'-monophosphate (dUMP) to 2'-deoxythymidine-5'-monophosphate (dTMP) while utilizing 5,10-methylenetetrahydrofolate (mTHF) as the methyl donor, and NADPH and FADH(2) as the reductant. In Aquifex aeolicus (strain VF5), this protein is Flavin-dependent thymidylate synthase.